The sequence spans 150 residues: Large ribosomal subunit protein bL9 (150 aa).

This sequence belongs to the bacterial ribosomal protein bL9 family.

Functionally, binds to the 23S rRNA. This Streptococcus agalactiae serotype Ia (strain ATCC 27591 / A909 / CDC SS700) protein is Large ribosomal subunit protein bL9.